The chain runs to 72 residues: Disintegrin crotatroxin (72 aa).

Positions 1-72 constitute a Disintegrin domain; that stretch reads AGEECDCGSP…ADCPRNGLYG (72 aa). Intrachain disulfides connect Cys5-Cys20, Cys7-Cys15, Cys14-Cys37, Cys28-Cys34, Cys33-Cys58, and Cys46-Cys65. A Cell attachment site motif is present at residues 50-52; that stretch reads RGD.

Belongs to the venom metalloproteinase (M12B) family. P-II subfamily. P-IIa sub-subfamily. In terms of assembly, monomer. Expressed by the venom gland.

Its subcellular location is the secreted. Its function is as follows. Inhibits fibrinogen interaction with platelets. Acts by binding to the alpha-IIb/beta-3 (ITGA2B/ITGB3) on the platelet surface and inhibits aggregation induced by ADP, thrombin, platelet-activating factor and collagen. In terms of biological role, inhibits ADP-induced platelet aggregation (IC(50) = 17.5nM), cancer cell migration in vitro, and experimental lung tumor colonization of cancer cells. This is Disintegrin crotatroxin from Crotalus atrox (Western diamondback rattlesnake).